The chain runs to 561 residues: MGVQSTANLPKETVSHLDTAPTPKPGVLLQVRAGRIKKGALGGEITSAIYKQQHDGPVFCSATGVLGDEHASSGHGGTERAVHQYNPDHYPDWRAENPPEPDLYDVGAYGENLVTTNMSDENVCIGDIYKLGDDVLLEVSEPRHPCFKLNSRFKWPRALKRTIRTGRAGWNMRVLKTGNICKGDTISLLERPYPKWSVLNVQRVIRARNVSLNLLAECTQLPMTDLFLDIAKERLRSAPKTYTLVDAHLVAQRVRKLTFALKEPLTIVNPAFDPYAFAQVTFGRETKFERSYSIVDGDIYKFSLGVSLDRQSRGGSAYLHNELKIGDQIEMSPGSNPGAMENDAKCDESLTRVLIVGGIGITAFLPSMRDWESKGLPYHLHYAIRSLEEAAFLDQLPKDKTTLYIRSEGQRLDISGAIPKPNHDGAYNARIFSCGPSGMMKECETVAKELGYPDHMLHFEDFGSGGGGDLGEPFEVEVDEPDSNRHETMTVPPNKTLLDVLNDAGFDVLYSCKSGACGACKVELCEGKVDYKSTALLGKEKGKALQACVDRGIGRLRIEID.

The interval 1–26 (MGVQSTANLPKETVSHLDTAPTPKPG) is disordered. The 138-residue stretch at 52-189 (QQHDGPVFCS…ICKGDTISLL (138 aa)) folds into the MOSC domain. The region spanning 237 to 342 (SAPKTYTLVD…PGSNPGAMEN (106 aa)) is the FAD-binding FR-type domain. Residues 288–289 (FE), 305–307 (GVS), 313–316 (RGGS), and T362 contribute to the FMN site. The 2Fe-2S ferredoxin-type domain occupies 474-561 (FEVEVDEPDS…GIGRLRIEID (88 aa)). [2Fe-2S] cluster is bound at residue C512. S514 serves as a coordination point for FMN. Residues C517, C520, and C548 each contribute to the [2Fe-2S] cluster site.

It belongs to the PDR/VanB family. As to quaternary structure, monomer. Requires FMN as cofactor.

Reductase; part of the Fusarium detoxification of benzoxazolinone cluster 2 (FDB2) involved in the degradation of benzoxazolinones produced by the host plant. Maize, wheat, and rye produce the 2 benzoxazinone phytoanticipins 2,4-dihy-droxy-7-methoxy-1,4-benzoxazin-3-one (DIMBOA) and 2,4-dihydroxy-1,4-benzoxazin-3-one (DIBOA) that, due to their inherent instability once released, spontaneously degrade to the more stable corresponding benzoxazolinones, 6-methoxy-2-benzoxazolinone (MBOA) and 2-benzoxazolinone (BOA), respectively. The first step in the detoxification of benzoxazolinones involves the hydrolysis of the cyclic ester bond of benzoxazolinones by the FDB1 cluster gamma-lactamase MBL1 to aminophenols. MBL1 is able to convert BOA into 2-aminophenol (2-AP), as well as MBOA into 5-methoxy-2-aminophenol (2-AMP). The FDB2 cluster N-malonyltransferase FDB2/NAT1 then metabolizes aminophenols via N-malonylation to non-toxic malonamic acids. FDB2/NAT1 converts 2-AP into N-(2-hydroxyphenyl) malonamic acid (HPMA) and 2-AMP into N-(2-hydroxy-4-methoxyphenyl) malonamic acid (HMPMA). The duplicated dienlactone hydrolases DLH1 and DLH2 may provide redundant function for hydrolyzing the lactone moiety in the BOA molecule. The roles of the amidases an other enzymes encoded by the 2 FDB clusters have not been identified so far. The polypeptide is Reductase FVEG_12641 (Gibberella moniliformis (strain M3125 / FGSC 7600) (Maize ear and stalk rot fungus)).